Reading from the N-terminus, the 57-residue chain is UPF0057 membrane protein T23F2.5 (57 aa).

Transmembrane regions (helical) follow at residues 3-23 (LTCT…IGVW) and 36-56 (ILLT…VILA).

The protein belongs to the UPF0057 (PMP3) family.

Its subcellular location is the membrane. In Caenorhabditis elegans, this protein is UPF0057 membrane protein T23F2.5.